A 312-amino-acid polypeptide reads, in one-letter code: Ribosomal RNA small subunit methyltransferase H (312 aa).

S-adenosyl-L-methionine is bound by residues 32 to 34 (AGH), aspartate 52, phenylalanine 79, aspartate 100, and glutamine 107.

It belongs to the methyltransferase superfamily. RsmH family.

Its subcellular location is the cytoplasm. The enzyme catalyses cytidine(1402) in 16S rRNA + S-adenosyl-L-methionine = N(4)-methylcytidine(1402) in 16S rRNA + S-adenosyl-L-homocysteine + H(+). Functionally, specifically methylates the N4 position of cytidine in position 1402 (C1402) of 16S rRNA. The chain is Ribosomal RNA small subunit methyltransferase H from Listeria monocytogenes serotype 4b (strain CLIP80459).